Consider the following 40-residue polypeptide: Adenylate kinase (40 aa).

ATP is bound at residue 10-15 (GAGKGT). The interval 30–40 (STGDMFIKAIK) is NMP. T31 provides a ligand contact to AMP.

This sequence belongs to the adenylate kinase family. In terms of assembly, monomer.

The protein resides in the cytoplasm. It carries out the reaction AMP + ATP = 2 ADP. It functions in the pathway purine metabolism; AMP biosynthesis via salvage pathway; AMP from ADP: step 1/1. Functionally, catalyzes the reversible transfer of the terminal phosphate group between ATP and AMP. Plays an important role in cellular energy homeostasis and in adenine nucleotide metabolism. The sequence is that of Adenylate kinase (adk) from Staphylococcus carnosus.